A 109-amino-acid polypeptide reads, in one-letter code: Nucleoid-associated protein BU482 (109 aa).

The protein belongs to the YbaB/EbfC family. In terms of assembly, homodimer.

The protein resides in the cytoplasm. The protein localises to the nucleoid. Its function is as follows. Binds to DNA and alters its conformation. May be involved in regulation of gene expression, nucleoid organization and DNA protection. The chain is Nucleoid-associated protein BU482 from Buchnera aphidicola subsp. Acyrthosiphon pisum (strain APS) (Acyrthosiphon pisum symbiotic bacterium).